The primary structure comprises 61 residues: Large ribosomal subunit protein uL30 (61 aa).

It belongs to the universal ribosomal protein uL30 family. As to quaternary structure, part of the 50S ribosomal subunit.

The chain is Large ribosomal subunit protein uL30 from Bordetella petrii (strain ATCC BAA-461 / DSM 12804 / CCUG 43448).